Here is a 297-residue protein sequence, read N- to C-terminus: Aspartate carbamoyltransferase catalytic subunit (297 aa).

The carbamoyl phosphate site is built by R49 and T50. An L-aspartate-binding site is contributed by K77. The carbamoyl phosphate site is built by R99, H129, and Q132. R162 and R215 together coordinate L-aspartate. G256 and P257 together coordinate carbamoyl phosphate.

Belongs to the aspartate/ornithine carbamoyltransferase superfamily. ATCase family. In terms of assembly, heterododecamer (2C3:3R2) of six catalytic PyrB chains organized as two trimers (C3), and six regulatory PyrI chains organized as three dimers (R2).

The catalysed reaction is carbamoyl phosphate + L-aspartate = N-carbamoyl-L-aspartate + phosphate + H(+). The protein operates within pyrimidine metabolism; UMP biosynthesis via de novo pathway; (S)-dihydroorotate from bicarbonate: step 2/3. Its function is as follows. Catalyzes the condensation of carbamoyl phosphate and aspartate to form carbamoyl aspartate and inorganic phosphate, the committed step in the de novo pyrimidine nucleotide biosynthesis pathway. In Legionella pneumophila (strain Lens), this protein is Aspartate carbamoyltransferase catalytic subunit.